The following is a 190-amino-acid chain: uncharacterized protein (190 aa).

This is an uncharacterized protein from Borreliella burgdorferi (strain ATCC 35210 / DSM 4680 / CIP 102532 / B31) (Borrelia burgdorferi).